The chain runs to 291 residues: Basic helix-loop-helix protein 80 (291 aa).

The disordered stretch occupies residues 65 to 120 (SAVLDTSPSVDRKRKAAEDSAHSKDSCKDGKSRRGKKASKEVEEKSTTEDEPPKGY). Positions 80–117 (AAEDSAHSKDSCKDGKSRRGKKASKEVEEKSTTEDEPP) are enriched in basic and acidic residues. A Nuclear localization signal motif is present at residues 125 to 132 (ARRGQATD). A basic motif; degenerate region spans residues 129–142 (QATDSHSLAERVRR). Positions 129–179 (QATDSHSLAERVRRERISERMRMLQALVPGCDKVTGKALILDEIINYVQSL) constitute a bHLH domain. The tract at residues 143 to 179 (ERISERMRMLQALVPGCDKVTGKALILDEIINYVQSL) is helix-loop-helix motif.

It belongs to the bHLH protein family. As to quaternary structure, homodimer. Interacts with IBH1, BC1 and LO9-177.

It localises to the nucleus. In terms of biological role, together with BCL2, positive regulator of cell elongation at least partially through increased gibberellic acid (GA) biosynthesis. The polypeptide is Basic helix-loop-helix protein 80 (Oryza sativa subsp. indica (Rice)).